We begin with the raw amino-acid sequence, 100 residues long: MTNRIELSGVVAKALVRSQSPSGVKHCHFWLEHRSTMVEADLPRQVFCRLPVVVSGARSEALTQNLVQGSSILVSGFLAYQTSRNGVGKLVLHADKISQI.

Positions 1 to 100 (MTNRIELSGV…VLHADKISQI (100 aa)) constitute an SSB domain.

The protein belongs to the PriB family. In terms of assembly, homodimer. Interacts with PriA and DnaT. Component of the replication restart primosome. Primosome assembly occurs via a 'hand-off' mechanism. PriA binds to replication forks, subsequently PriB then DnaT bind; DnaT then displaces ssDNA to generate the helicase loading substrate.

Its function is as follows. Involved in the restart of stalled replication forks, which reloads the replicative helicase on sites other than the origin of replication; the PriA-PriB pathway is the major replication restart pathway. During primosome assembly it facilitates complex formation between PriA and DnaT on DNA; stabilizes PriA on DNA. Stimulates the DNA unwinding activity of PriA helicase. The chain is Replication restart protein PriB from Vibrio cholerae serotype O1 (strain ATCC 39315 / El Tor Inaba N16961).